Consider the following 630-residue polypeptide: Transcription factor MYC1 (630 aa).

Disordered regions lie at residues 356–398 (FGDS…NNEE) and 430–463 (VKEA…EAER). Over residues 440–449 (KPRKRGRKPA) the composition is skewed to basic residues. Residues 450-463 (NGREEPLNHVEAER) are compositionally biased toward basic and acidic residues. A basic motif; degenerate region spans residues 453–466 (EEPLNHVEAERQRR). A bHLH domain is found at 453–502 (EEPLNHVEAERQRREKLNQRFYALRAVVPNVSKMDKASLLGDAIAYINEL). The interval 467–502 (EKLNQRFYALRAVVPNVSKMDKASLLGDAIAYINEL) is helix-loop-helix motif.

In terms of tissue distribution, highly expressed in trichomes and at lower levels in leaves and flowers. Expressed at low levels in roots, stems, leaves, flowers and fruits.

It is found in the nucleus. Functionally, transcriptional activator that binds to the G-box motif (5'-AACGTG-3') found in a number of promoters of jasmonate-induced genes. Transcription activator involved in the transcriptional regulation of terpene biosynthesis in glandular trichomes. Binds to the promoter of the linalool synthase TPS5 and promotes TPS5 gene transactivation. Acts synergistically with EOT1 in the transactivation of TPS5. Involved in type VI glandular trichome development. Involved in the activation of terpene synthases required for volatile mono- and sesquiterpenes synthesis by the glandular cells of type VI trichomes. This Solanum lycopersicum (Tomato) protein is Transcription factor MYC1.